The chain runs to 334 residues: tRNA-dihydrouridine(20/20a) synthase (334 aa).

FMN-binding positions include 18 to 20 and Gln71; that span reads PMM. The Proton donor role is filled by Cys101. FMN is bound by residues Lys140, His172, 212–214, and 234–235; these read NGG and GR.

Belongs to the Dus family. DusA subfamily. It depends on FMN as a cofactor.

It carries out the reaction 5,6-dihydrouridine(20) in tRNA + NADP(+) = uridine(20) in tRNA + NADPH + H(+). It catalyses the reaction 5,6-dihydrouridine(20) in tRNA + NAD(+) = uridine(20) in tRNA + NADH + H(+). The enzyme catalyses 5,6-dihydrouridine(20a) in tRNA + NADP(+) = uridine(20a) in tRNA + NADPH + H(+). The catalysed reaction is 5,6-dihydrouridine(20a) in tRNA + NAD(+) = uridine(20a) in tRNA + NADH + H(+). Its function is as follows. Catalyzes the synthesis of 5,6-dihydrouridine (D), a modified base found in the D-loop of most tRNAs, via the reduction of the C5-C6 double bond in target uridines. Specifically modifies U20 and U20a in tRNAs. The polypeptide is tRNA-dihydrouridine(20/20a) synthase (Xanthomonas axonopodis pv. citri (strain 306)).